Consider the following 175-residue polypeptide: Gamma-crystallin B (175 aa).

Beta/gamma crystallin 'Greek key' domains are found at residues 2–40 and 41–83; these read GKIT…RVES and GCWM…CLIP. The connecting peptide stretch occupies residues 84 to 88; it reads PHSGA. 2 Beta/gamma crystallin 'Greek key' domains span residues 89–129 and 130–172; these read YRMK…NVLE and GSWI…RRVM.

The protein belongs to the beta/gamma-crystallin family. Monomer.

Crystallins are the dominant structural components of the vertebrate eye lens. The sequence is that of Gamma-crystallin B (CRYGB) from Homo sapiens (Human).